The following is a 493-amino-acid chain: Neuronal pentraxin receptor (493 aa).

The Cytoplasmic portion of the chain corresponds to M1 to K2. The chain crosses the membrane as a helical; Signal-anchor for type II membrane protein span at residues F3–I23. The Extracellular segment spans residues A24–A493. Residues P37 to V72 form a disordered region. N42 carries an N-linked (GlcNAc...) asparagine glycan. The span at S57 to V72 shows a compositional bias: low complexity. N-linked (GlcNAc...) asparagine glycosylation occurs at N211. The region spanning D285–C487 is the Pentraxin (PTX) domain. Residues C315 and C376 are joined by a disulfide bond. 5 residues coordinate Ca(2+): N340, E418, Q419, D420, and Q430. Residue N456 is glycosylated (N-linked (GlcNAc...) asparagine).

As to quaternary structure, heteropentamer with NPTX1 and/or NPTX2. Also binds taipoxin-associated calcium-binding protein 49 (TCBP49/RCN2). Interacts with KLHL2. Ca(2+) is required as a cofactor. In terms of processing, ubiquitinated by a cullin-RING-based BCR (BTB-CUL3-RBX1) E3 ubiquitin-protein ligase complex containing KLHL2.

The protein resides in the membrane. Its function is as follows. May be involved in mediating uptake of synaptic material during synapse remodeling or in mediating the synaptic clustering of AMPA glutamate receptors at a subset of excitatory synapses. The protein is Neuronal pentraxin receptor (Nptxr) of Mus musculus (Mouse).